Here is a 221-residue protein sequence, read N- to C-terminus: Cytidylate kinase 1 (221 aa).

7-15 (GPSASGKSS) provides a ligand contact to ATP.

It belongs to the cytidylate kinase family. Type 1 subfamily.

Its subcellular location is the cytoplasm. The enzyme catalyses CMP + ATP = CDP + ADP. It catalyses the reaction dCMP + ATP = dCDP + ADP. The polypeptide is Cytidylate kinase 1 (Borrelia garinii subsp. bavariensis (strain ATCC BAA-2496 / DSM 23469 / PBi) (Borreliella bavariensis)).